A 287-amino-acid chain; its full sequence is 3-hydroxyanthranilate 3,4-dioxygenase (287 aa).

Positions 1–163 are domain A (catalytic); that stretch reads MTNQSLHVNI…SKENETGKPD (163 aa). O2 is bound at residue R46. Positions 50, 56, and 94 each coordinate Fe cation. E56 is a binding site for substrate. Substrate is bound by residues R98 and E108. Residues 164–180 form a linker region; the sequence is PANPIKPAPYPLNTMNV. The domain B stretch occupies residues 181–287; it reads MTPFSFREWV…AQDPDRKRPY (107 aa).

It belongs to the 3-HAO family. In terms of assembly, monomer. Requires Fe(2+) as cofactor.

The protein resides in the cytoplasm. It is found in the cytosol. It catalyses the reaction 3-hydroxyanthranilate + O2 = (2Z,4Z)-2-amino-3-carboxymuconate 6-semialdehyde. It participates in cofactor biosynthesis; NAD(+) biosynthesis; quinolinate from L-kynurenine: step 3/3. In terms of biological role, catalyzes the oxidative ring opening of 3-hydroxyanthranilate to 2-amino-3-carboxymuconate semialdehyde, which spontaneously cyclizes to quinolinate. The polypeptide is 3-hydroxyanthranilate 3,4-dioxygenase (haao) (Danio rerio (Zebrafish)).